The chain runs to 225 residues: Probable polyketide biosynthesis zinc-dependent hydrolase BaeB (225 aa).

Zn(2+)-binding residues include histidine 62, histidine 64, aspartate 66, histidine 67, histidine 123, aspartate 140, and histidine 181.

This sequence belongs to the metallo-beta-lactamase superfamily. It depends on Zn(2+) as a cofactor.

It is found in the cytoplasm. It participates in antibiotic biosynthesis; bacillaene biosynthesis. In terms of biological role, probably involved in some intermediate steps for the synthesis of the antibiotic polyketide bacillaene which is involved in secondary metabolism. This chain is Probable polyketide biosynthesis zinc-dependent hydrolase BaeB (baeB), found in Bacillus velezensis (strain DSM 23117 / BGSC 10A6 / LMG 26770 / FZB42) (Bacillus amyloliquefaciens subsp. plantarum).